Consider the following 890-residue polypeptide: DNA mismatch repair protein MutS (890 aa).

634–641 (GPNMGGKS) lines the ATP pocket.

Belongs to the DNA mismatch repair MutS family.

Functionally, this protein is involved in the repair of mismatches in DNA. It is possible that it carries out the mismatch recognition step. This protein has a weak ATPase activity. This Burkholderia pseudomallei (strain K96243) protein is DNA mismatch repair protein MutS.